The following is a 272-amino-acid chain: Large ribosomal subunit protein uL4 (272 aa).

It belongs to the universal ribosomal protein uL4 family. In terms of assembly, part of the 50S ribosomal subunit.

In terms of biological role, one of the primary rRNA binding proteins, this protein initially binds near the 5'-end of the 23S rRNA. It is important during the early stages of 50S assembly. It makes multiple contacts with different domains of the 23S rRNA in the assembled 50S subunit and ribosome. Forms part of the polypeptide exit tunnel. The chain is Large ribosomal subunit protein uL4 from Aeropyrum pernix (strain ATCC 700893 / DSM 11879 / JCM 9820 / NBRC 100138 / K1).